Consider the following 123-residue polypeptide: Small ribosomal subunit protein uS13 (123 aa).

The segment at 94 to 123 is disordered; that stretch reads RRGLPVRGQHTKNNARTRKGPARAIAGKKK.

This sequence belongs to the universal ribosomal protein uS13 family. In terms of assembly, part of the 30S ribosomal subunit. Forms a loose heterodimer with protein S19. Forms two bridges to the 50S subunit in the 70S ribosome.

In terms of biological role, located at the top of the head of the 30S subunit, it contacts several helices of the 16S rRNA. In the 70S ribosome it contacts the 23S rRNA (bridge B1a) and protein L5 of the 50S subunit (bridge B1b), connecting the 2 subunits; these bridges are implicated in subunit movement. Contacts the tRNAs in the A and P-sites. This Oenococcus oeni (strain ATCC BAA-331 / PSU-1) protein is Small ribosomal subunit protein uS13.